The following is a 544-amino-acid chain: Membrane protein insertase YidC (544 aa).

The next 5 helical transmembrane spans lie at 13 to 33 (LSLF…SNIL), 343 to 363 (WGLS…PLTF), 409 to 429 (LGGC…YSLV), 461 to 481 (LYFV…FTQL), and 506 to 526 (MPIM…IYWI).

This sequence belongs to the OXA1/ALB3/YidC family. Type 1 subfamily. As to quaternary structure, interacts with the Sec translocase complex via SecD. Specifically interacts with transmembrane segments of nascent integral membrane proteins during membrane integration.

It localises to the cell inner membrane. In terms of biological role, required for the insertion and/or proper folding and/or complex formation of integral membrane proteins into the membrane. Involved in integration of membrane proteins that insert both dependently and independently of the Sec translocase complex, as well as at least some lipoproteins. Aids folding of multispanning membrane proteins. This is Membrane protein insertase YidC from Borreliella burgdorferi (strain ZS7) (Borrelia burgdorferi).